Here is a 250-residue protein sequence, read N- to C-terminus: MKTKDAVAVVTGGASGLGLATTKRLLDAGAQVVVVDLRGDDVVGGLGDRARFAQADVTDEAAVSNALELADSLGPVRVVVNCAGTGNAIRVLSRDGVFPLAAFRKIVDINLVGTFNVLRLGAERIAKTEPIGEERGVIINTASVAAFDGQIGQAAYSASKGGVVGMTLPIARDLASKLIRVVTIAPGLFDTPLLASLPAEAKASLGQQVPHPSRLGNPDEYGALVLHIIENPMLNGEVIRLDGAIRMAPR.

NAD(+)-binding residues include serine 15, leucine 17, aspartate 36, aspartate 56, valine 57, and cysteine 82. Position 143 (serine 143) interacts with substrate. Tyrosine 156, lysine 160, phenylalanine 189, and threonine 191 together coordinate NAD(+). The Proton acceptor role is filled by tyrosine 156.

It belongs to the short-chain dehydrogenases/reductases (SDR) family.

This is an uncharacterized protein from Mycobacterium tuberculosis (strain CDC 1551 / Oshkosh).